A 161-amino-acid chain; its full sequence is Inner membrane assembly complex subunit 17 (161 aa).

The transit peptide at 1 to 22 (MLNPRPCVPRLLSAVARCHKPY) directs the protein to the mitochondrion. Over 23–84 (STSIKSLEDL…QQQQQALKKF (62 aa)) the chain is Mitochondrial matrix. Residues 85 to 107 (VRPMWIFLLMSSFFYLTGHYIWW) traverse the membrane as a helical segment. The Mitochondrial intermembrane portion of the chain corresponds to 108 to 161 (KLEYDEREIELHKQVQALRQELDSAIAAKHSGKEPALSGAGAKKPKRWYLAWLW). The stretch at 109–138 (LEYDEREIELHKQVQALRQELDSAIAAKHS) forms a coiled coil.

It belongs to the INA17 family. Component of the inner membrane assembly (INA) complex, composed of INA17 and INA22. Interacts with a subset of F(1)F(0)-ATP synthase subunits of the F(1)-domain and the peripheral stalk.

The protein resides in the mitochondrion inner membrane. In terms of biological role, component of the INA complex (INAC) that promotes the biogenesis of mitochondrial F(1)F(0)-ATP synthase. INAC facilitates the assembly of the peripheral stalk and promotes the assembly of the catalytic F(1)-domain with the membrane-embedded F(0)-domain. The polypeptide is Inner membrane assembly complex subunit 17 (Lachancea thermotolerans (strain ATCC 56472 / CBS 6340 / NRRL Y-8284) (Yeast)).